Here is an 831-residue protein sequence, read N- to C-terminus: Periplasmic nitrate reductase (831 aa).

The segment at residues 1-38 (MSMARRDFIKQTAAAAAATVAGVPLTGYTQNIVTESEA) is a signal peptide (tat-type signal). In terms of domain architecture, 4Fe-4S Mo/W bis-MGD-type spans 41-97 (LKWSKAPCRFCGTGCGVNVAVKDNQVVATHGDFNAEVNKGLNCVKGYFLSKIMYGSD). Residues Cys48, Cys51, Cys55, and Cys83 each coordinate [4Fe-4S] cluster. Residues Lys85, Gln152, Asn177, Cys181, 214–221 (WGSNMAEM), 245–249 (STFEH), 264–266 (QSD), Met375, Gln379, Asn485, 511–512 (SD), Lys534, Asp561, and 721–730 (TGRVLEHWHS) contribute to the Mo-bis(molybdopterin guanine dinucleotide) site. Trp797 is a binding site for substrate. Mo-bis(molybdopterin guanine dinucleotide) contacts are provided by Asn805 and Lys822.

It belongs to the prokaryotic molybdopterin-containing oxidoreductase family. NasA/NapA/NarB subfamily. As to quaternary structure, component of the periplasmic nitrate reductase NapAB complex composed of NapA and NapB. [4Fe-4S] cluster serves as cofactor. Requires Mo-bis(molybdopterin guanine dinucleotide) as cofactor. In terms of processing, predicted to be exported by the Tat system. The position of the signal peptide cleavage has not been experimentally proven.

It is found in the periplasm. It carries out the reaction 2 Fe(II)-[cytochrome] + nitrate + 2 H(+) = 2 Fe(III)-[cytochrome] + nitrite + H2O. Functionally, catalytic subunit of the periplasmic nitrate reductase complex NapAB. Receives electrons from NapB and catalyzes the reduction of nitrate to nitrite. The chain is Periplasmic nitrate reductase from Bordetella parapertussis (strain 12822 / ATCC BAA-587 / NCTC 13253).